Consider the following 332-residue polypeptide: MAELFYDADADLSIIQGRKVAVIGYGSQGHAHALSLRDSGVDVRVGLHEGSKSKAKAEEQGLRVVPVAEAAAEADVIMILVPDPIQAEVYEKDIKDNLKDGDALFFGHGLNIRYGFVKPPAGVDVCMVAPKGPGHLVRRQYEEGRGVPCLVAVEQDATGNAFALALSYAKGIGGTRAGVIRTTFTEETETDLFGEQAVLAGGVTALVKAGFETLTEAGYQPEIAYFECLHELKLIVDLMYEGGLEKMRWSISETAEWGDYVTGPRIITDVTKAEMRKVLAEIQDGTFAKNWMDEYHGGLKKYNEYKKQDSEHLLETTGKELRKLMSWVDEEA.

A KARI N-terminal Rossmann domain is found at 2–182 (AELFYDADAD…GGTRAGVIRT (181 aa)). Residues 25-28 (YGSQ), Ser-51, Ser-53, and 83-86 (DPIQ) each bind NADP(+). The active site involves His-108. Gly-134 contacts NADP(+). The region spanning 183 to 328 (TFTEETETDL…KELRKLMSWV (146 aa)) is the KARI C-terminal knotted domain. Positions 191, 195, 227, and 231 each coordinate Mg(2+). Ser-252 is a binding site for substrate.

The protein belongs to the ketol-acid reductoisomerase family. Mg(2+) serves as cofactor.

The enzyme catalyses (2R)-2,3-dihydroxy-3-methylbutanoate + NADP(+) = (2S)-2-acetolactate + NADPH + H(+). It catalyses the reaction (2R,3R)-2,3-dihydroxy-3-methylpentanoate + NADP(+) = (S)-2-ethyl-2-hydroxy-3-oxobutanoate + NADPH + H(+). It functions in the pathway amino-acid biosynthesis; L-isoleucine biosynthesis; L-isoleucine from 2-oxobutanoate: step 2/4. The protein operates within amino-acid biosynthesis; L-valine biosynthesis; L-valine from pyruvate: step 2/4. Its function is as follows. Involved in the biosynthesis of branched-chain amino acids (BCAA). Catalyzes an alkyl-migration followed by a ketol-acid reduction of (S)-2-acetolactate (S2AL) to yield (R)-2,3-dihydroxy-isovalerate. In the isomerase reaction, S2AL is rearranged via a Mg-dependent methyl migration to produce 3-hydroxy-3-methyl-2-ketobutyrate (HMKB). In the reductase reaction, this 2-ketoacid undergoes a metal-dependent reduction by NADPH to yield (R)-2,3-dihydroxy-isovalerate. The chain is Ketol-acid reductoisomerase (NADP(+)) 2 from Streptomyces coelicolor (strain ATCC BAA-471 / A3(2) / M145).